We begin with the raw amino-acid sequence, 1347 residues long: Protocadherin-11 X-linked (1347 aa).

The signal sequence occupies residues 1 to 23 (MDLLSGTYIFAVLLACVVFHSGA). Topologically, residues 24–812 (QEKNYTIREE…VSSPTSDYVK (789 aa)) are extracellular. 7 Cadherin domains span residues 26 to 139 (KNYT…APLF), 140 to 249 (PATV…HPVF), 250 to 355 (KETE…VPSI), 362 to 466 (NPIN…APVF), 467 to 570 (TQSF…SPVF), 571 to 673 (THNE…KPVF), and 677 to 795 (PSNY…APVT). 3 N-linked (GlcNAc...) asparagine glycosylation sites follow: asparagine 27, asparagine 48, and asparagine 54. A glycan (N-linked (GlcNAc...) asparagine) is linked at asparagine 344. An N-linked (GlcNAc...) asparagine glycan is attached at asparagine 553. Asparagine 773 carries an N-linked (GlcNAc...) asparagine glycan. Residues 813 to 833 (ILVAAVAGTVTVVVVIFITAV) form a helical membrane-spanning segment. Topologically, residues 834–1347 (VRCRQAPHLK…DSPIMEEHPL (514 aa)) are cytoplasmic. Disordered stretches follow at residues 1031–1050 (IWIHPQPQRKSEGKGAGKSQ), 1057–1091 (LPEGSQESSSDGGLGEHDAGSLTSTSHGLPLGYPQ), 1097–1116 (RATPSNRTEGDGNSDPESTF), and 1325–1347 (TFTPRQQARPSRGDSPIMEEHPL).

The protein localises to the cell membrane. Functionally, potential calcium-dependent cell-adhesion protein. This Pongo pygmaeus (Bornean orangutan) protein is Protocadherin-11 X-linked (PCDH11X).